The primary structure comprises 227 residues: PKHD-type hydroxylase NE2125 (227 aa).

The 102-residue stretch at Lys-78–Ser-179 folds into the Fe2OG dioxygenase domain. Fe cation is bound by residues His-97, Asp-99, and His-160. Residue Arg-170 coordinates 2-oxoglutarate.

Fe(2+) serves as cofactor. L-ascorbate is required as a cofactor.

The polypeptide is PKHD-type hydroxylase NE2125 (Nitrosomonas europaea (strain ATCC 19718 / CIP 103999 / KCTC 2705 / NBRC 14298)).